Reading from the N-terminus, the 313-residue chain is Homeobox protein CDX-2 (313 aa).

Residue serine 60 is modified to Phosphoserine. The tract at residues 113–153 (HAHHHPHHHPHHPAAAPSCASGLLQTLNPGPPGPAATGAAE) is disordered. Basic residues predominate over residues 114 to 124 (AHHHPHHHPHH). Positions 185–215 (KDKYRVVYTDHQRLELEKEFHYSRYITIRRK) are interaction with DNA. A DNA-binding region (homeobox) is located at residues 185–244 (KDKYRVVYTDHQRLELEKEFHYSRYITIRRKAELAATLGLSERQVKIWFQNRRAKERKIN). The interval 227 to 241 (RQVKIWFQNRRAKER) is interaction with 5-mCpG DNA. A disordered region spans residues 242 to 313 (KINKKKLQQQ…GGVLNPTVTQ (72 aa)). Composition is skewed to low complexity over residues 249-261 (QQQQQQQQQQQLA) and 271-300 (QPGSLRSVPEPLSPVSSLQGSVPGSVPGVL). Serine 283 bears the Phosphoserine mark. The 4S motif; modulates transactivation activity and protein stability motif lies at 283–295 (SPVSSLQGSVPGS).

This sequence belongs to the Caudal homeobox family. Can bind DNA as a monomer or homodimer. In terms of processing, ubiquitinated, leading to its degradation by the proteasome. Phosphorylation at Ser-60 reduces transactivation capacity. Phosphorylation at Ser-283 reduces transactivation capacity and also increases ubiquitin-dependent proteasome degradation. Expressed in the intestine.

The protein resides in the nucleus. Transcription factor which regulates the transcription of multiple genes expressed in the intestinal epithelium. Binds to the promoter of the intestinal sucrase-isomaltase SI and activates SI transcription. Binds to the DNA sequence 5'-ATAAAAACTTAT-3' in the promoter region of VDR and activates VDR transcription. Binds to and activates transcription of LPH. Activates transcription of CLDN2 and intestinal mucin MUC2. Binds to the 5'-AATTTTTTACAACACCT-3' DNA sequence in the promoter region of CA1 and activates CA1 transcription. Important in broad range of functions from early differentiation to maintenance of the intestinal epithelial lining of both the small and large intestine. Binds preferentially to methylated DNA. The polypeptide is Homeobox protein CDX-2 (CDX2) (Mesocricetus auratus (Golden hamster)).